Reading from the N-terminus, the 70-residue chain is DNA-directed RNA polymerase subunit omega (70 aa).

Belongs to the RNA polymerase subunit omega family. In terms of assembly, the RNAP catalytic core consists of 2 alpha, 1 beta, 1 beta' and 1 omega subunit. When a sigma factor is associated with the core the holoenzyme is formed, which can initiate transcription.

It carries out the reaction RNA(n) + a ribonucleoside 5'-triphosphate = RNA(n+1) + diphosphate. Functionally, promotes RNA polymerase assembly. Latches the N- and C-terminal regions of the beta' subunit thereby facilitating its interaction with the beta and alpha subunits. The polypeptide is DNA-directed RNA polymerase subunit omega (Nitratiruptor sp. (strain SB155-2)).